Reading from the N-terminus, the 61-residue chain is Putative MSV199 domain-containing protein 200R (61 aa).

The polypeptide is Putative MSV199 domain-containing protein 200R (Invertebrate iridescent virus 6 (IIV-6)).